An 86-amino-acid polypeptide reads, in one-letter code: MAEERNFRKVRRGYVVSDKMDKTISVELEQRSTHPLYGKVVRSTRTVKVHDEHNEAHIGDLVSIMETRPLSKTKRWRLDSIIERAK.

Belongs to the universal ribosomal protein uS17 family. As to quaternary structure, part of the 30S ribosomal subunit.

Functionally, one of the primary rRNA binding proteins, it binds specifically to the 5'-end of 16S ribosomal RNA. The chain is Small ribosomal subunit protein uS17 from Bifidobacterium adolescentis (strain ATCC 15703 / DSM 20083 / NCTC 11814 / E194a).